The sequence spans 432 residues: Adenylosuccinate synthetase 2 (432 aa).

GTP-binding positions include 13-19 (GDEGKGK) and 41-43 (GHT). Residue D14 is the Proton acceptor of the active site. 2 residues coordinate Mg(2+): D14 and G41. IMP contacts are provided by residues 14-17 (DEGK), 39-42 (NAGH), T130, R144, Q225, T240, and R304. H42 (proton donor) is an active-site residue. 300-306 (ATTGRSR) serves as a coordination point for substrate. GTP is bound by residues R306, 332 to 334 (KLD), and 415 to 417 (STG).

Belongs to the adenylosuccinate synthetase family. Homodimer. Requires Mg(2+) as cofactor.

Its subcellular location is the cytoplasm. It catalyses the reaction IMP + L-aspartate + GTP = N(6)-(1,2-dicarboxyethyl)-AMP + GDP + phosphate + 2 H(+). Its pathway is purine metabolism; AMP biosynthesis via de novo pathway; AMP from IMP: step 1/2. Plays an important role in the de novo pathway of purine nucleotide biosynthesis. Catalyzes the first committed step in the biosynthesis of AMP from IMP. This is Adenylosuccinate synthetase 2 from Photorhabdus laumondii subsp. laumondii (strain DSM 15139 / CIP 105565 / TT01) (Photorhabdus luminescens subsp. laumondii).